Here is a 376-residue protein sequence, read N- to C-terminus: MDIYKFAVRPLLFDLVKADPEWLHQQTMRSLSWLSHTSDRTSTKWVQNILQKSLCIEDSRLEQNLFGLRFPNPVGLAAGFDKDGVAARIWSSLGFGFAELGTVTFVAQPGNPPPRLFRLPLDQAALNRMGFNNHGAAVMATRLADEKGLFSIPIGINLGKSKVTPLEAAAEDYLNSFRLLKELGDYFVVNVSSPNTPGLRSLQDASMLSSILDVLQKENQSHKPIFVKIAPDLEWEAIADIIGLAKTYQLAGIIATNTTIRRDGLKTQVIEQTGKAPQEEAGGISGAPVRDRSTEIIRFIWQQTQGEIPIIGVGGIFTPEDAWAKITAGASLIQVYTGWIYQGPMMVSQILTGLLAKLEEHELNSISEAIGLEFKS.

FMN is bound by residues 78–82 and T102; that span reads AGFDK. Substrate is bound at residue K82. Position 127 to 131 (127 to 131) interacts with substrate; that stretch reads NRMGF. FMN is bound by residues N157 and N190. Substrate is bound at residue N190. Residue S193 is the Nucleophile of the active site. N195 serves as a coordination point for substrate. FMN-binding residues include K228 and T256. 257-258 is a substrate binding site; sequence NT. Residues G286, G315, and 336 to 337 contribute to the FMN site; that span reads YT.

Belongs to the dihydroorotate dehydrogenase family. Type 2 subfamily. Monomer. FMN is required as a cofactor.

It localises to the cell membrane. The enzyme catalyses (S)-dihydroorotate + a quinone = orotate + a quinol. It participates in pyrimidine metabolism; UMP biosynthesis via de novo pathway; orotate from (S)-dihydroorotate (quinone route): step 1/1. Its function is as follows. Catalyzes the conversion of dihydroorotate to orotate with quinone as electron acceptor. The chain is Dihydroorotate dehydrogenase (quinone) from Trichormus variabilis (strain ATCC 29413 / PCC 7937) (Anabaena variabilis).